Reading from the N-terminus, the 73-residue chain is Small ribosomal subunit protein bS21 (73 aa).

The protein belongs to the bacterial ribosomal protein bS21 family.

The polypeptide is Small ribosomal subunit protein bS21 (Parvibaculum lavamentivorans (strain DS-1 / DSM 13023 / NCIMB 13966)).